A 384-amino-acid chain; its full sequence is Gastrin-releasing peptide receptor (384 aa).

At methionine 1–glycine 38 the chain is on the extracellular side. An N-linked (GlcNAc...) asparagine glycan is attached at asparagine 20. Residues isoleucine 39–isoleucine 62 form a helical membrane-spanning segment. Residues lysine 63–asparagine 76 lie on the Cytoplasmic side of the membrane. Residues leucine 77–valine 96 form a helical membrane-spanning segment. The Extracellular portion of the chain corresponds to aspartate 97–lysine 114. Cysteine 113 and cysteine 196 form a disulfide bridge. A helical transmembrane segment spans residues leucine 115–alanine 136. Over aspartate 137 to histidine 152 the chain is Cytoplasmic. Residues alanine 153–proline 174 form a helical membrane-spanning segment. Topologically, residues glutamate 175–lysine 208 are extracellular. The helical transmembrane segment at isoleucine 209 to alanine 234 threads the bilayer. The Cytoplasmic portion of the chain corresponds to lysine 235–lysine 264. A helical membrane pass occupies residues threonine 265–leucine 285. Residues tyrosine 286–methionine 298 are Extracellular-facing. A helical membrane pass occupies residues leucine 299–leucine 325. Residues serine 326–valine 384 are Cytoplasmic-facing. Residue cysteine 339 is the site of S-palmitoyl cysteine attachment. Serine 350 bears the Phosphoserine mark.

It belongs to the G-protein coupled receptor 1 family. As to expression, highly expressed in pancreas. Also expressed in stomach, adrenal cortex and brain. In brain, expressed in cells throughout the cortex.

The protein resides in the cell membrane. Functionally, receptor for gastrin-releasing peptide (GRP). Signals via association with G proteins that activate a phosphatidylinositol-calcium second messenger system, resulting in Akt phosphorylation. Contributes to the regulation of food intake. Contributes to the perception of prurient stimuli and transmission of itch signals in the spinal cord that promote scratching behavior, but does not play a role in the perception of pain. Contributes primarily to nonhistaminergic itch sensation. In one study, shown to act in the amygdala as part of an inhibitory network which inhibits memory specifically related to learned fear. In another study, shown to contribute to disinhibition of glutamatergic cells in the auditory cortex via signaling on vasoactive intestinal peptide-expressing cells which leads to enhanced auditory fear memories. Contributes to the induction of sighing through signaling in the pre-Botzinger complex, a cluster of several thousand neurons in the ventrolateral medulla responsible for inspiration during respiratory activity. In Homo sapiens (Human), this protein is Gastrin-releasing peptide receptor (GRPR).